Here is a 137-residue protein sequence, read N- to C-terminus: Peptide methionine sulfoxide reductase MsrB (137 aa).

Residues 7–129 (AEELKKNLSE…NSASLRFTDG (123 aa)) form the MsrB domain. Zn(2+)-binding residues include C46, C49, C95, and C98. C118 functions as the Nucleophile in the catalytic mechanism.

The protein belongs to the MsrB Met sulfoxide reductase family. The cofactor is Zn(2+).

It catalyses the reaction L-methionyl-[protein] + [thioredoxin]-disulfide + H2O = L-methionyl-(R)-S-oxide-[protein] + [thioredoxin]-dithiol. This Escherichia coli O45:K1 (strain S88 / ExPEC) protein is Peptide methionine sulfoxide reductase MsrB.